We begin with the raw amino-acid sequence, 263 residues long: Single-stranded DNA-binding protein WHY1, chloroplastic (263 aa).

The N-terminal 47 residues, 1 to 47, are a transit peptide targeting the chloroplast; it reads MSQLLSTPLMAVNSNPRFLSSSSVLVTGGFAVKRHGFALKPTTKTVK. Residues 89–94 form a required for ssDNA binding region; sequence KGKAAL. The short motif at 167-180 is the Nuclear localization signal element; sequence KGKSDEGKVRKVLK.

Belongs to the Whirly family. In terms of assembly, homotetramer.

It is found in the plastid. The protein localises to the chloroplast. The protein resides in the nucleus. Its function is as follows. Single-stranded DNA-binding protein that functions in both chloroplasts and nucleus. In chloroplasts, maintains plastid genome stability by preventing break-induced and short homology-dependent illegitimate recombinations. In nucleus, modulates telomere length homeostasis by inhibiting the action of the telomerase at the extreme termini of chromosomes. Is recruited to a distal element upstream of the kinesin KP1 to mediate the transcriptional repression of KP1. Is required for full salicylic acid-dependent plant disease resistance responses. Can bind double-stranded DNA in vivo. This chain is Single-stranded DNA-binding protein WHY1, chloroplastic (WHY1), found in Arabidopsis thaliana (Mouse-ear cress).